Consider the following 307-residue polypeptide: Putative serine/threonine-protein phosphatase C22H10.04 (307 aa).

4 residues coordinate Mn(2+): aspartate 51, histidine 53, aspartate 79, and asparagine 111. Histidine 112 functions as the Proton donor in the catalytic mechanism. The Mn(2+) site is built by histidine 161 and histidine 236.

It belongs to the PPP phosphatase family. PP-X subfamily. Mn(2+) is required as a cofactor.

The catalysed reaction is O-phospho-L-seryl-[protein] + H2O = L-seryl-[protein] + phosphate. It carries out the reaction O-phospho-L-threonyl-[protein] + H2O = L-threonyl-[protein] + phosphate. In Schizosaccharomyces pombe (strain 972 / ATCC 24843) (Fission yeast), this protein is Putative serine/threonine-protein phosphatase C22H10.04.